Reading from the N-terminus, the 484-residue chain is Probable protein disulfide-isomerase ER-60 (484 aa).

The signal sequence occupies residues Met1 to Ala14. Thioredoxin domains lie at Ser15–Gly125 and Phe338–Thr467. Catalysis depends on nucleophile residues Cys46, Cys49, Cys388, and Cys391. Disulfide bonds link Cys46–Cys49 and Cys388–Cys391. A Prevents secretion from ER motif is present at residues Lys481–Leu484.

It belongs to the protein disulfide isomerase family.

It localises to the endoplasmic reticulum lumen. The catalysed reaction is Catalyzes the rearrangement of -S-S- bonds in proteins.. In Schistosoma mansoni (Blood fluke), this protein is Probable protein disulfide-isomerase ER-60.